The following is a 286-amino-acid chain: 2,3,4,5-tetrahydropyridine-2,6-dicarboxylate N-succinyltransferase (286 aa).

Substrate is bound by residues Arg109 and Asp146.

This sequence belongs to the transferase hexapeptide repeat family. In terms of assembly, homotrimer.

Its subcellular location is the cytoplasm. The enzyme catalyses (S)-2,3,4,5-tetrahydrodipicolinate + succinyl-CoA + H2O = (S)-2-succinylamino-6-oxoheptanedioate + CoA. The protein operates within amino-acid biosynthesis; L-lysine biosynthesis via DAP pathway; LL-2,6-diaminopimelate from (S)-tetrahydrodipicolinate (succinylase route): step 1/3. This Bartonella tribocorum (strain CIP 105476 / IBS 506) protein is 2,3,4,5-tetrahydropyridine-2,6-dicarboxylate N-succinyltransferase.